We begin with the raw amino-acid sequence, 464 residues long: Glutamate--tRNA ligase (464 aa).

Residues 11 to 21 (PSPTGYLHIGG) carry the 'HIGH' region motif. The short motif at 253-257 (KLSKR) is the 'KMSKS' region element. Lysine 256 is an ATP binding site.

This sequence belongs to the class-I aminoacyl-tRNA synthetase family. Glutamate--tRNA ligase type 1 subfamily. Monomer.

It is found in the cytoplasm. It catalyses the reaction tRNA(Glu) + L-glutamate + ATP = L-glutamyl-tRNA(Glu) + AMP + diphosphate. In terms of biological role, catalyzes the attachment of glutamate to tRNA(Glu) in a two-step reaction: glutamate is first activated by ATP to form Glu-AMP and then transferred to the acceptor end of tRNA(Glu). The polypeptide is Glutamate--tRNA ligase (Metamycoplasma arthritidis (strain 158L3-1) (Mycoplasma arthritidis)).